Here is a 314-residue protein sequence, read N- to C-terminus: Melanoma-associated antigen 3 (314 aa).

Positions Met-1–Gly-20 are enriched in basic and acidic residues. Residues Met-1–Pro-99 form a disordered region. Residues Glu-21–Thr-44 show a composition bias toward low complexity. Over residues Pro-65–Ser-87 the composition is skewed to polar residues. An MAGE domain is found at Leu-109–Val-308.

Interacts with TRIM28. In terms of processing, ubiquitinated by the DCX(DCAF12) complex specifically recognizes the diglutamate (Glu-Glu) at the C-terminus, leading to its degradation. Expressed in many tumors of several types, such as melanoma, head and neck squamous cell carcinoma, lung carcinoma and breast carcinoma, but not in normal tissues except for testes and placenta. Never expressed in kidney tumors, Leukemias and lymphomas.

Activator of ubiquitin ligase activity of RING-type zinc finger-containing E3 ubiquitin-protein ligases that acts as a repressor of autophagy. May enhance ubiquitin ligase activity of TRIM28 and stimulate p53/TP53 ubiquitination by TRIM28. Proposed to act through recruitment and/or stabilization of the Ubl-conjugating enzyme (E2) at the E3:substrate complex. May play a role in embryonal development and tumor transformation or aspects of tumor progression. In vitro promotes cell viability in melanoma cell lines. Antigen recognized on a melanoma by autologous cytolytic T-lymphocytes. The polypeptide is Melanoma-associated antigen 3 (Homo sapiens (Human)).